Here is a 240-residue protein sequence, read N- to C-terminus: Small ribosomal subunit protein uS3 (240 aa).

Residues 39–107 form the KH type-2 domain; that stretch reads IRDFIKKEAK…ELHLNIVEVR (69 aa). 2 stretches are compositionally biased toward basic and acidic residues: residues 212–221 and 231–240; these read PQARDRRATE and PRRDRDRDAR. The tract at residues 212-240 is disordered; sequence PQARDRRATEAQDGPSPRGPRRDRDRDAR.

Belongs to the universal ribosomal protein uS3 family. In terms of assembly, part of the 30S ribosomal subunit. Forms a tight complex with proteins S10 and S14.

Binds the lower part of the 30S subunit head. Binds mRNA in the 70S ribosome, positioning it for translation. The protein is Small ribosomal subunit protein uS3 of Paracoccus denitrificans (strain Pd 1222).